We begin with the raw amino-acid sequence, 582 residues long: Vesicular glutamate transporter 2 (582 aa).

Residues 1–71 (MESVKQRILA…CTCFGLPRRY (71 aa)) lie on the Cytoplasmic side of the membrane. A helical transmembrane segment spans residues 72-92 (IIAIMSGLGFCISFGIRCNLG). The Vesicular segment spans residues 93–125 (VAIVDMVNNSTIHRGGKVIKEKAKFNWDPETVG). N100 and N101 each carry an N-linked (GlcNAc...) asparagine glycan. Residues 126-146 (MIHGSFFWGYIITQIPGGYIA) form a helical membrane-spanning segment. The Cytoplasmic segment spans residues 147 to 148 (SR). The chain crosses the membrane as a helical span at residues 149 to 169 (LAANRVFGAAILLTSTLNMLI). At 170-177 (PSAARVHY) the chain is on the vesicular side. Residues 178–198 (GCVIFVRILQGLVEGVTYPAC) form a helical membrane-spanning segment. Topologically, residues 199–216 (HGIWSKWAPPLERSRLAT) are cytoplasmic. Residues 217-237 (TSFCGSYAGAVIAMPLAGILV) form a helical membrane-spanning segment. Over 238 to 244 (QYTGWSS) the chain is Vesicular. The chain crosses the membrane as a helical span at residues 245-265 (VFYVYGSFGMVWYMFWLLVSY). The Cytoplasmic segment spans residues 266-310 (ESPAKHPTITDEERRYIEESIGESANLLGAMEKFKTPWRKFFTSM). The helical transmembrane segment at 311–331 (PVYAIIVANFCRSWTFYLLLI) threads the bilayer. At 332–349 (SQPAYFEEVFGFEISKVG) the chain is on the vesicular side. The helical transmembrane segment at 350-370 (MLSAVPHLVMTIIVPIGGQIA) threads the bilayer. The Cytoplasmic portion of the chain corresponds to 371–386 (DFLRSKQILSTTTVRK). A helical transmembrane segment spans residues 387 to 407 (IMNCGGFGMEATLLLVVGYSH). The Vesicular portion of the chain corresponds to 408–409 (TR). The chain crosses the membrane as a helical span at residues 410–430 (GVAISFLVLAVGFSGFAISGF). Residues 431-443 (NVNHLDIAPRYAS) are Cytoplasmic-facing. A helical membrane pass occupies residues 444–464 (ILMGISNGVGTLSGMVCPIIV). Topologically, residues 465–477 (GAMTKNKSREEWQ) are vesicular. N-linked (GlcNAc...) asparagine glycosylation is present at N470. Residues 478-498 (YVFLIAALVHYGGVIFYAIFA) traverse the membrane as a helical segment. The Cytoplasmic portion of the chain corresponds to 499 to 582 (SGEKQPWADP…HSYKDRVDYS (84 aa)).

The protein belongs to the major facilitator superfamily. Sodium/anion cotransporter family. VGLUT subfamily. As to expression, predominantly expressed in adult brain. Expressed in amygdala, caudate nucleus, cerebral cortex, frontal lobe, hippocampus, medulla, occipital lobe, putamen, spinal cord, substantia nigra, subthalamic nucleus, temporal lobe and thalamus.

The protein localises to the cytoplasmic vesicle. Its subcellular location is the secretory vesicle. It localises to the synaptic vesicle membrane. It is found in the synapse. The protein resides in the synaptosome. The protein localises to the cell membrane. It carries out the reaction L-glutamate(out) = L-glutamate(in). The catalysed reaction is 3 Na(+)(out) + phosphate(out) = 3 Na(+)(in) + phosphate(in). It catalyses the reaction phosphate(in) = phosphate(out). The enzyme catalyses K(+)(in) + H(+)(out) = K(+)(out) + H(+)(in). It carries out the reaction chloride(in) = chloride(out). With respect to regulation, chloride channel activity is allosterically activated by lumenal H(+) and Cl(-) leading to synaptic vesicles acidification. The L-glutamate transport activity is allosterically activated by lumenal H(+) and Cl(-). The allosteric requirement for H(+) efficiently prevents non-vesicular efflux across the plasma membrane. The L-glutamate uniporter activity exhibits a biphasic dependence on chloride concentration. Its function is as follows. Multifunctional transporter that transports L-glutamate as well as multiple ions such as chloride, proton, potassium, sodium and phosphate. At the synaptic vesicle membrane, mainly functions as a uniporter which transports preferentially L-glutamate but also, phosphate from the cytoplasm into synaptic vesicles at presynaptic nerve terminals of excitatory neural cells. The L-glutamate or phosphate uniporter activity is electrogenic and is driven by the proton electrochemical gradient, mainly by the electrical gradient established by the vacuolar H(+)-ATPase across the synaptic vesicle membrane. In addition, functions as a chloride channel that allows the chloride permeation through the synaptic vesicle membrane therefore affects the proton electrochemical gradient and promotes synaptic vesicles acidification. Moreover, functions as a vesicular K(+)/H(+) antiport allowing to maintain the electrical gradient and to decrease chemical gradient and therefore sustain vesicular glutamate uptake. The vesicular H(+)/H(+) antiport activity is electroneutral. At the plasma membrane, following exocytosis, functions as a symporter of Na(+) and phosphate from the extracellular space to the cytoplasm allowing synaptic phosphate homeostasis regulation. The symporter activity is driven by an inside negative membrane potential and is electrogenic. Also involved in the regulation of retinal hyaloid vessel regression during postnatal development. May also play a role in the endocrine glutamatergic system of other tissues such as pineal gland and pancreas. The sequence is that of Vesicular glutamate transporter 2 from Homo sapiens (Human).